A 623-amino-acid chain; its full sequence is Glutathione import ATP-binding protein GsiA (623 aa).

2 consecutive ABC transporter domains span residues 15-269 and 314-564; these read VENL…RALL and LRVR…RKLL. ATP is bound by residues 49 to 56 and 357 to 364; these read GESGSGKS.

This sequence belongs to the ABC transporter superfamily. Glutathione importer (TC 3.A.1.5.11) family. The complex is composed of two ATP-binding proteins (GsiA), two transmembrane proteins (GsiC and GsiD) and a solute-binding protein (GsiB).

It is found in the cell inner membrane. It carries out the reaction glutathione(out) + ATP + H2O = glutathione(in) + ADP + phosphate + H(+). Its function is as follows. Part of the ABC transporter complex GsiABCD involved in glutathione import. Responsible for energy coupling to the transport system. The protein is Glutathione import ATP-binding protein GsiA of Escherichia coli O1:K1 / APEC.